The chain runs to 574 residues: 3-hydroxy-3-methylglutaryl-coenzyme A reductase 3 (574 aa).

The interval 1–30 (MDVRRRPVKPLYPSEHISSGEPLKPHNQDS) is disordered. The helical transmembrane segment at 41–61 (PLYLTNGLFFTMFFSVMYFLL) threads the bilayer. A glycan (N-linked (GlcNAc...) asparagine) is linked at N78. A helical membrane pass occupies residues 83-103 (VAMVSLIASVIYLLGFFGIGF). Positions 104 to 161 (VQSFVSKGNNDSWDVEDESPEQFIDRTVTPPPVRRNIPMKSVPVAEKTAQIITPFSSE) are linker. N-linked (GlcNAc...) asparagine glycosylation occurs at N113. Residues 162-574 (DDEVVIKSVV…YNRSCKDVTK (413 aa)) are catalytic. Residue E256 is the Charge relay system of the active site. The N-linked (GlcNAc...) asparagine glycan is linked to N320. K388 functions as the Charge relay system in the catalytic mechanism. N-linked (GlcNAc...) asparagine glycosylation is present at N433. The active-site Charge relay system is D464. Residue H562 is the Proton donor of the active site. An N-linked (GlcNAc...) asparagine glycan is attached at N566.

Belongs to the HMG-CoA reductase family. Expressed in mature petals and anthers.

It localises to the endoplasmic reticulum membrane. The enzyme catalyses (R)-mevalonate + 2 NADP(+) + CoA = (3S)-3-hydroxy-3-methylglutaryl-CoA + 2 NADPH + 2 H(+). The protein operates within metabolic intermediate biosynthesis; (R)-mevalonate biosynthesis; (R)-mevalonate from acetyl-CoA: step 3/3. Its function is as follows. Catalyzes the synthesis of mevalonate. The specific precursor of all isoprenoid compounds present in plants. In Solanum tuberosum (Potato), this protein is 3-hydroxy-3-methylglutaryl-coenzyme A reductase 3 (HMG3).